A 488-amino-acid chain; its full sequence is Patatin-like protein 7 (488 aa).

A disordered region spans residues glutamine 23 to methionine 49. Polar residues predominate over residues alanine 32–threonine 47. The PNPLA domain occupies leucine 101–isoleucine 301. Positions glycine 105 to glycine 110 match the GXGXXG motif. Serine 145 acts as the Nucleophile in catalysis.

The protein belongs to the patatin family. As to expression, highly expressed in roots and at lower levels in leaves, stems, flowers and siliques.

The protein localises to the cell membrane. Functionally, possesses non-specific lipolytic acyl hydrolase (LAH) activity. Catalyzes the hydrolysis of the galactolipids monogalactosyldiacylglycerol (MGDG) and digalactosyldiacylglycerol (DGDG), and the phoshpolipids phosphatidylcholine (PC), phosphatidylethanolamine (PE), phosphatidylglycerol (PG), phosphatidic acid (PA), phosphatidylserine (PS). Favors the release of fatty acid at the sn-2 position for PC. Possesses acyl-CoA thioesterase activity. Negatively affects disease resistance to the necrotic fungal pathogen Botrytis cinerea and the avirulent bacteria Pseudomonas syringae by promoting cell death and reducing the efficiency of the hypersensitive response, respectively. However, PLP2 contributes to resistance to cucumber mosaic virus (CMV), an obligate parasite inducing hypersensitive response. May negatively regulate oxylipin production, possibly via participating in membrane repair that includes removal of oxidatively modified lipids. Enzymatic products of PLP2 may influence cellulose content and cell elongation. The chain is Patatin-like protein 7 (PLP7) from Arabidopsis thaliana (Mouse-ear cress).